An 88-amino-acid polypeptide reads, in one-letter code: Putative sulfur carrier protein AF_0552 (88 aa).

This sequence belongs to the sulfur carrier protein CysO family.

This Archaeoglobus fulgidus (strain ATCC 49558 / DSM 4304 / JCM 9628 / NBRC 100126 / VC-16) protein is Putative sulfur carrier protein AF_0552.